The following is a 170-amino-acid chain: UPF0251 protein MA_1017 (170 aa).

This sequence belongs to the UPF0251 family.

The chain is UPF0251 protein MA_1017 from Methanosarcina acetivorans (strain ATCC 35395 / DSM 2834 / JCM 12185 / C2A).